The primary structure comprises 1375 residues: Mediator of RNA polymerase II transcription subunit 13 (1375 aa).

The segment at 1–51 (MKASEMARPPMRPGNPHAFASPATTPSRTASPNNAQGANVRTTQGGNQAGA) is disordered. A compositionally biased stretch (polar residues) spans 22–51 (PATTPSRTASPNNAQGANVRTTQGGNQAGA). 2 coiled-coil regions span residues 182 to 216 (ADDS…WLSR) and 297 to 324 (QLER…KDEA). Residues 313–324 (AEEDAMRRKDEA) are compositionally biased toward basic and acidic residues. Disordered stretches follow at residues 313–333 (AEED…SSPF), 350–370 (YPTP…DTPS), 397–417 (YTTT…APLE), 537–581 (ATSP…PASL), 660–689 (RAVS…VDTH), 841–862 (QAKG…IPSN), and 1233–1285 (TPTT…AADP). Polar residues predominate over residues 397–411 (YTTTDNQQHASTSPT). Residues 666–685 (SASDSESETSDMSEGSPEDP) show a composition bias toward acidic residues. Residues 1233 to 1259 (TPTTPAPSNSSAQANTNTPGSTPQTGV) are compositionally biased toward polar residues.

The protein belongs to the Mediator complex subunit 13 family. In terms of assembly, component of the SRB8-11 complex, which itself associates with the Mediator complex.

The protein localises to the nucleus. Functionally, component of the SRB8-11 complex. The SRB8-11 complex is a regulatory module of the Mediator complex which is itself involved in regulation of basal and activated RNA polymerase II-dependent transcription. The SRB8-11 complex may be involved in the transcriptional repression of a subset of genes regulated by Mediator. It may inhibit the association of the Mediator complex with RNA polymerase II to form the holoenzyme complex. This chain is Mediator of RNA polymerase II transcription subunit 13 (SSN2), found in Phaeosphaeria nodorum (strain SN15 / ATCC MYA-4574 / FGSC 10173) (Glume blotch fungus).